Reading from the N-terminus, the 867-residue chain is Coiled-coil domain-containing protein 178 (867 aa).

Coiled-coil stretches lie at residues 153–204 (DEKC…KIDS), 233–414 (WHLE…ENQY), 445–470 (ACTK…TNES), and 662–696 (MIFY…KNKF).

This chain is Coiled-coil domain-containing protein 178 (CCDC178), found in Homo sapiens (Human).